Reading from the N-terminus, the 376-residue chain is Putative C-mannosyltransferase DPY19L2P2 (376 aa).

N-linked (GlcNAc...) asparagine glycosylation occurs at asparagine 32. The next 6 helical transmembrane spans lie at 52 to 72, 107 to 127, 154 to 174, 182 to 202, 233 to 253, and 299 to 319; these read ACFY…LFFI, LRES…TLIL, AQFI…VGYI, IIYM…GNSM, LNCW…LKFL, and LLIY…CFIF.

Belongs to the dpy-19 family. Fibroblast, lung, lymphoblast, spleen and testis.

It localises to the membrane. Probable C-mannosyltransferase that mediates C-mannosylation of tryptophan residues on target proteins. The polypeptide is Putative C-mannosyltransferase DPY19L2P2 (DPY19L2P2) (Homo sapiens (Human)).